Here is a 204-residue protein sequence, read N- to C-terminus: N-(5'-phosphoribosyl)anthranilate isomerase (204 aa).

The protein belongs to the TrpF family.

It catalyses the reaction N-(5-phospho-beta-D-ribosyl)anthranilate = 1-(2-carboxyphenylamino)-1-deoxy-D-ribulose 5-phosphate. It participates in amino-acid biosynthesis; L-tryptophan biosynthesis; L-tryptophan from chorismate: step 3/5. In Bacillus cereus (strain AH187), this protein is N-(5'-phosphoribosyl)anthranilate isomerase.